The sequence spans 104 residues: uncharacterized protein (104 aa).

The protein to A.aeolicus AQ_377.

This is an uncharacterized protein from Archaeoglobus fulgidus (strain ATCC 49558 / DSM 4304 / JCM 9628 / NBRC 100126 / VC-16).